The following is a 286-amino-acid chain: ATP synthase gamma chain (286 aa).

This sequence belongs to the ATPase gamma chain family. As to quaternary structure, F-type ATPases have 2 components, CF(1) - the catalytic core - and CF(0) - the membrane proton channel. CF(1) has five subunits: alpha(3), beta(3), gamma(1), delta(1), epsilon(1). CF(0) has three main subunits: a, b and c.

It localises to the cell inner membrane. In terms of biological role, produces ATP from ADP in the presence of a proton gradient across the membrane. The gamma chain is believed to be important in regulating ATPase activity and the flow of protons through the CF(0) complex. The polypeptide is ATP synthase gamma chain (Flavobacterium johnsoniae (strain ATCC 17061 / DSM 2064 / JCM 8514 / BCRC 14874 / CCUG 350202 / NBRC 14942 / NCIMB 11054 / UW101) (Cytophaga johnsonae)).